The chain runs to 105 residues: Large ribosomal subunit protein uL24 (105 aa).

This sequence belongs to the universal ribosomal protein uL24 family. Part of the 50S ribosomal subunit.

In terms of biological role, one of two assembly initiator proteins, it binds directly to the 5'-end of the 23S rRNA, where it nucleates assembly of the 50S subunit. One of the proteins that surrounds the polypeptide exit tunnel on the outside of the subunit. This Acinetobacter baumannii (strain AB307-0294) protein is Large ribosomal subunit protein uL24.